A 158-amino-acid chain; its full sequence is SsrA-binding protein (158 aa).

Belongs to the SmpB family.

Its subcellular location is the cytoplasm. In terms of biological role, required for rescue of stalled ribosomes mediated by trans-translation. Binds to transfer-messenger RNA (tmRNA), required for stable association of tmRNA with ribosomes. tmRNA and SmpB together mimic tRNA shape, replacing the anticodon stem-loop with SmpB. tmRNA is encoded by the ssrA gene; the 2 termini fold to resemble tRNA(Ala) and it encodes a 'tag peptide', a short internal open reading frame. During trans-translation Ala-aminoacylated tmRNA acts like a tRNA, entering the A-site of stalled ribosomes, displacing the stalled mRNA. The ribosome then switches to translate the ORF on the tmRNA; the nascent peptide is terminated with the 'tag peptide' encoded by the tmRNA and targeted for degradation. The ribosome is freed to recommence translation, which seems to be the essential function of trans-translation. This Saccharopolyspora erythraea (strain ATCC 11635 / DSM 40517 / JCM 4748 / NBRC 13426 / NCIMB 8594 / NRRL 2338) protein is SsrA-binding protein.